Here is a 244-residue protein sequence, read N- to C-terminus: NAD-dependent protein deacetylase (244 aa).

Positions 1–244 (MTGEQLAHWI…LSAVQRAVMP (244 aa)) constitute a Deacetylase sirtuin-type domain. Residues alanine 22, threonine 26, phenylalanine 33, arginine 34, glutamine 103, isoleucine 105, aspartate 106, and histidine 121 each contribute to the NAD(+) site. Phenylalanine 33 is a nicotinamide binding site. Nicotinamide contacts are provided by isoleucine 105 and aspartate 106. Histidine 121 serves as the catalytic Proton acceptor. Cysteine 129, cysteine 132, cysteine 150, and cysteine 152 together coordinate Zn(2+). Positions 190, 191, 213, and 231 each coordinate NAD(+).

This sequence belongs to the sirtuin family. Class U subfamily. It depends on Zn(2+) as a cofactor.

The protein resides in the cytoplasm. The catalysed reaction is N(6)-acetyl-L-lysyl-[protein] + NAD(+) + H2O = 2''-O-acetyl-ADP-D-ribose + nicotinamide + L-lysyl-[protein]. Its function is as follows. NAD-dependent protein deacetylase which modulates the activities of several enzymes which are inactive in their acetylated form. The polypeptide is NAD-dependent protein deacetylase (Cutibacterium acnes (strain DSM 16379 / KPA171202) (Propionibacterium acnes)).